Consider the following 1238-residue polypeptide: Receptor-type tyrosine-protein phosphatase eta (1238 aa).

The signal sequence occupies residues 1–28 (MKPAARETRTPPRSPGLRWALLPLLLLL). Residues 29-876 (RQGQVLCAGA…LPQDPGVICG (848 aa)) are Extracellular-facing. The region spanning 39-122 (APNPIFDIEA…LNKTITTEPW (84 aa)) is the Fibronectin type-III 1 domain. N-linked (GlcNAc...) asparagine glycans are attached at residues asparagine 62, asparagine 78, asparagine 85, asparagine 90, asparagine 110, asparagine 114, asparagine 145, asparagine 164, asparagine 173, asparagine 182, asparagine 198, asparagine 207, asparagine 244, asparagine 253, asparagine 267, asparagine 278, asparagine 313, asparagine 317, asparagine 333, asparagine 366, asparagine 379, asparagine 398, asparagine 403, asparagine 437, asparagine 452, asparagine 488, asparagine 506, asparagine 538, asparagine 572, asparagine 576, asparagine 662, asparagine 668, asparagine 685, asparagine 691, asparagine 725, asparagine 811, and asparagine 838. A Fibronectin type-III 2 domain is found at 170–266 (PGTNNSFAFP…GQPRNKVFKT (97 aa)). Fibronectin type-III domains are found at residues 270-358 (QVSD…SPDQ), 359-443 (VSDF…TDPS), 444-527 (AVTD…TQYT), 528-621 (RPSS…TEPE), 622-718 (PVTS…TDPP), and 717-803 (PPTP…SEVL). A helical transmembrane segment spans residues 877-897 (AVFGCIFGALAITAVGGFIFW). Over 898 to 1238 (RKKRTDAKNN…MFGKTNGYIA (341 aa)) the chain is Cytoplasmic. Serine 910 is subject to Phosphoserine. The Tyrosine-protein phosphatase domain maps to 942 to 1199 (FAEEYEDLKL…VFLNQCVLDI (258 aa)). Residues aspartate 1106, 1140–1146 (CSAGVGR), and glutamine 1184 contribute to the substrate site. Cysteine 1140 serves as the catalytic Phosphocysteine intermediate.

It belongs to the protein-tyrosine phosphatase family. Receptor class 3 subfamily. As to quaternary structure, monomer. Interacts with CTNNB1 (phosphorylated) and JUP (phosphorylated). Interacts with FLT3 (phosphorylated). Interacts with GAB1 and GRB2. In terms of tissue distribution, expressed at high levels in brain, kidney, spleen and intestine, and at lower levels in liver, lung, thymus and heart. Expressed at a high level in the myeloid cell line FDC-P2, and at a lower level in the pre-B lymphoid cell line WEHI-231 and the T hybridoma cell line HB21.7.31. Not expressed in the fibroblast cell line NIH3T3 or the erythroid cell line F5-5. Expressed in macrophages.

It localises to the cell membrane. The protein resides in the cell projection. It is found in the ruffle membrane. Its subcellular location is the cell junction. It carries out the reaction O-phospho-L-tyrosyl-[protein] + H2O = L-tyrosyl-[protein] + phosphate. Its function is as follows. Tyrosine phosphatase which dephosphorylates or contributes to the dephosphorylation of CTNND1, FLT3, PDGFRB, MET, KDR, LYN, SRC, MAPK1, MAPK3, EGFR, TJP1, OCLN, PIK3R1 and PIK3R2. Plays a role in cell adhesion, migration, proliferation and differentiation. Has a role in megakaryocytes and platelet formation. Involved in vascular development. May be involved in the mechanism of contact inhibition of cell growth. Regulator of macrophage adhesion and spreading. Positively affects cell-matrix adhesion. Positive regulator of platelet activation and thrombosis. Negative regulator of cell proliferation. Negative regulator of PDGF-stimulated cell migration; through dephosphorylation of PDGFR. Positive regulator of endothelial cell survival, as well as of VEGF-induced SRC and AKT activation; through KDR dephosphorylation. Negative regulator of EGFR signaling pathway; through EGFR dephosphorylation. Enhances the barrier function of epithelial junctions during reassembly. Negatively regulates T-cell receptor (TCR) signaling. Upon T-cell TCR activation, it is up-regulated and excluded from the immunological synapses, while upon T-cell-antigen presenting cells (APC) disengagement, it is no longer excluded and can dephosphorylate PLCG1 and LAT to down-regulate prolongation of signaling. This is Receptor-type tyrosine-protein phosphatase eta (Ptprj) from Mus musculus (Mouse).